Consider the following 282-residue polypeptide: HTH-type transcriptional activator RhaR (282 aa).

The HTH araC/xylS-type domain maps to 179–277 (DKLITALAGS…GMTPVQWRHR (99 aa)). 2 consecutive DNA-binding regions (H-T-H motif) follow at residues 196–217 (EKFC…RTQT) and 244–267 (VSEV…NREV).

Binds DNA as a dimer.

The protein resides in the cytoplasm. In terms of biological role, activates expression of the rhaSR operon in response to L-rhamnose. This Enterobacter sp. (strain 638) protein is HTH-type transcriptional activator RhaR.